A 105-amino-acid chain; its full sequence is MNTLFGKAKEEAKPITPKSVDEYPEAPVSLGITLVNFTGDWRTFMPVIDESKCVKCYICWKYCPEPAIYIKEDGFVAIDYDYCKGCGICANECPTKAITMVREEK.

4Fe-4S ferredoxin-type domains are found at residues 44-73 and 74-103; these read FMPVIDESKCVKCYICWKYCPEPAIYIKED and GFVAIDYDYCKGCGICANECPTKAITMVRE. Cys-53, Cys-56, Cys-59, Cys-63, Cys-83, Cys-86, Cys-89, and Cys-93 together coordinate [4Fe-4S] cluster.

In terms of assembly, heterotetramer of one alpha, one beta, one delta and one gamma chain. [4Fe-4S] cluster is required as a cofactor.

The catalysed reaction is 3-methyl-2-oxobutanoate + 2 oxidized [2Fe-2S]-[ferredoxin] + CoA = 2-methylpropanoyl-CoA + 2 reduced [2Fe-2S]-[ferredoxin] + CO2 + H(+). The sequence is that of Ketoisovalerate oxidoreductase subunit VorD (vorD) from Pyrococcus horikoshii (strain ATCC 700860 / DSM 12428 / JCM 9974 / NBRC 100139 / OT-3).